Consider the following 354-residue polypeptide: Ornithine carbamoyltransferase, catabolic (354 aa).

Residues 67-70 (STRT), Gln-94, Arg-118, and 145-148 (HPTQ) contribute to the carbamoyl phosphate site. L-ornithine is bound by residues Asn-177, Asp-241, and 245–246 (SM). Carbamoyl phosphate-binding positions include 284-285 (CL) and Arg-329.

Belongs to the aspartate/ornithine carbamoyltransferase superfamily. OTCase family.

It localises to the cytoplasm. It carries out the reaction carbamoyl phosphate + L-ornithine = L-citrulline + phosphate + H(+). It functions in the pathway amino-acid degradation; L-arginine degradation via ADI pathway; carbamoyl phosphate from L-arginine: step 2/2. Its function is as follows. Reversibly catalyzes the transfer of the carbamoyl group from carbamoyl phosphate (CP) to the N(epsilon) atom of ornithine (ORN) to produce L-citrulline. The polypeptide is Ornithine carbamoyltransferase, catabolic (arcB) (Lactococcus lactis subsp. lactis (strain IL1403) (Streptococcus lactis)).